The chain runs to 319 residues: Transaldolase (319 aa).

Lys126 acts as the Schiff-base intermediate with substrate in catalysis.

This sequence belongs to the transaldolase family. Type 1 subfamily. As to quaternary structure, homodimer.

It localises to the cytoplasm. It carries out the reaction D-sedoheptulose 7-phosphate + D-glyceraldehyde 3-phosphate = D-erythrose 4-phosphate + beta-D-fructose 6-phosphate. It functions in the pathway carbohydrate degradation; pentose phosphate pathway; D-glyceraldehyde 3-phosphate and beta-D-fructose 6-phosphate from D-ribose 5-phosphate and D-xylulose 5-phosphate (non-oxidative stage): step 2/3. Its function is as follows. Transaldolase is important for the balance of metabolites in the pentose-phosphate pathway. In Bordetella petrii (strain ATCC BAA-461 / DSM 12804 / CCUG 43448), this protein is Transaldolase.